Reading from the N-terminus, the 135-residue chain is Small ribosomal subunit protein uS9 (135 aa).

The disordered stretch occupies residues 96 to 135; sequence SADNRKPLKTEGHLSRDPRAKERRKYGLKKARKAPQFSKR. The segment covering 97–115 has biased composition (basic and acidic residues); it reads ADNRKPLKTEGHLSRDPRA. Residues 116-135 are compositionally biased toward basic residues; it reads KERRKYGLKKARKAPQFSKR.

The protein belongs to the universal ribosomal protein uS9 family.

This chain is Small ribosomal subunit protein uS9, found in Prochlorococcus marinus (strain MIT 9313).